Reading from the N-terminus, the 60-residue chain is Adenylate kinase isoenzyme 1 (60 aa).

9 to 14 (GSGKGT) lines the ATP pocket. Ser25 bears the Phosphoserine mark. The NMP stretch occupies residues 25 to 53 (STGDLLRVDSSNGFLIDGYPRQGEEFERK). Thr26 and Arg31 together coordinate AMP.

Belongs to the adenylate kinase family. AK1 subfamily. Monomer. Mg(2+) is required as a cofactor.

It is found in the cytoplasm. It catalyses the reaction a ribonucleoside 5'-phosphate + ATP = a ribonucleoside 5'-diphosphate + ADP. It carries out the reaction AMP + ATP = 2 ADP. The enzyme catalyses dAMP + ATP = dADP + ADP. The catalysed reaction is dATP + AMP = dADP + ADP. It catalyses the reaction dAMP + dATP = 2 dADP. It carries out the reaction a 2'-deoxyribonucleoside 5'-diphosphate + ATP = a 2'-deoxyribonucleoside 5'-triphosphate + ADP. The enzyme catalyses a ribonucleoside 5'-diphosphate + ATP = a ribonucleoside 5'-triphosphate + ADP. The catalysed reaction is CDP + GTP = CTP + GDP. It catalyses the reaction GDP + ATP = GTP + ADP. It carries out the reaction UDP + ATP = UTP + ADP. The enzyme catalyses GTP + UDP = UTP + GDP. The catalysed reaction is dTDP + GTP = dTTP + GDP. It catalyses the reaction dCDP + GTP = dCTP + GDP. It carries out the reaction dGDP + ATP = dGTP + ADP. The enzyme catalyses dADP + GTP = dATP + GDP. The catalysed reaction is thiamine diphosphate + ADP = thiamine triphosphate + AMP. Functionally, catalyzes the reversible transfer of the terminal phosphate group between ATP and AMP. Also displays broad nucleoside diphosphate kinase activity. Plays an important role in cellular energy homeostasis and in adenine nucleotide metabolism. Also catalyzes at a very low rate the synthesis of thiamine triphosphate (ThTP) from thiamine diphosphate (ThDP) and ADP. The chain is Adenylate kinase isoenzyme 1 (Ak1) from Mesocricetus auratus (Golden hamster).